We begin with the raw amino-acid sequence, 351 residues long: Phospho-N-acetylmuramoyl-pentapeptide-transferase (351 aa).

The next 10 membrane-spanning stretches (helical) occupy residues Gly3 to Ile23, Thr51 to Val71, Pro76 to Leu96, Gly113 to Phe133, Phe152 to Thr172, Gly181 to Gly201, Pro223 to Phe243, Ile250 to Thr270, Leu275 to Val295, and Phe329 to Met349.

This sequence belongs to the glycosyltransferase 4 family. MraY subfamily. Requires Mg(2+) as cofactor.

It is found in the cell membrane. It carries out the reaction UDP-N-acetyl-alpha-D-muramoyl-L-alanyl-gamma-D-glutamyl-meso-2,6-diaminopimeloyl-D-alanyl-D-alanine + di-trans,octa-cis-undecaprenyl phosphate = di-trans,octa-cis-undecaprenyl diphospho-N-acetyl-alpha-D-muramoyl-L-alanyl-D-glutamyl-meso-2,6-diaminopimeloyl-D-alanyl-D-alanine + UMP. The protein operates within cell wall biogenesis; peptidoglycan biosynthesis. Functionally, catalyzes the initial step of the lipid cycle reactions in the biosynthesis of the cell wall peptidoglycan: transfers peptidoglycan precursor phospho-MurNAc-pentapeptide from UDP-MurNAc-pentapeptide onto the lipid carrier undecaprenyl phosphate, yielding undecaprenyl-pyrophosphoryl-MurNAc-pentapeptide, known as lipid I. This Thermobifida fusca (strain YX) protein is Phospho-N-acetylmuramoyl-pentapeptide-transferase.